Consider the following 220-residue polypeptide: Probable chemoreceptor glutamine deamidase CheD (220 aa).

Belongs to the CheD family.

The catalysed reaction is L-glutaminyl-[protein] + H2O = L-glutamyl-[protein] + NH4(+). Probably deamidates glutamine residues to glutamate on methyl-accepting chemotaxis receptors (MCPs), playing an important role in chemotaxis. The polypeptide is Probable chemoreceptor glutamine deamidase CheD (Cupriavidus metallidurans (strain ATCC 43123 / DSM 2839 / NBRC 102507 / CH34) (Ralstonia metallidurans)).